The sequence spans 490 residues: Cheilanthifoline synthase (490 aa).

Residues 2-22 traverse the membrane as a helical segment; the sequence is EESLWVVTATVVVVFAIAKLL. Cys432 provides a ligand contact to heme.

This sequence belongs to the cytochrome P450 family. Heme serves as cofactor. As to expression, expressed in roots. Detected in leaves and stems.

The protein localises to the endoplasmic reticulum membrane. It carries out the reaction (S)-scoulerine + reduced [NADPH--hemoprotein reductase] + O2 = (S)-cheilanthifoline + oxidized [NADPH--hemoprotein reductase] + 2 H2O + H(+). It participates in alkaloid biosynthesis. Functionally, methylenedioxy bridge-forming cytochrome P450 involved in the biosynthesis of isoquinoline alkaloids. Converts (S)-scoulerine into (R,S)-cheilanthifoline. Catalyzes an oxidative reaction that does not incorporate oxygen into the product. The sequence is that of Cheilanthifoline synthase (CYP719A5) from Eschscholzia californica (California poppy).